Reading from the N-terminus, the 375-residue chain is Ribosomal RNA large subunit methyltransferase G (375 aa).

This sequence belongs to the methyltransferase superfamily. RlmG family.

It is found in the cytoplasm. The catalysed reaction is guanosine(1835) in 23S rRNA + S-adenosyl-L-methionine = N(2)-methylguanosine(1835) in 23S rRNA + S-adenosyl-L-homocysteine + H(+). Functionally, specifically methylates the guanine in position 1835 (m2G1835) of 23S rRNA. The chain is Ribosomal RNA large subunit methyltransferase G from Erwinia tasmaniensis (strain DSM 17950 / CFBP 7177 / CIP 109463 / NCPPB 4357 / Et1/99).